A 165-amino-acid chain; its full sequence is Urease accessory protein UreE (165 aa).

Belongs to the UreE family.

It is found in the cytoplasm. Its function is as follows. Involved in urease metallocenter assembly. Binds nickel. Probably functions as a nickel donor during metallocenter assembly. The protein is Urease accessory protein UreE of Flavobacterium johnsoniae (strain ATCC 17061 / DSM 2064 / JCM 8514 / BCRC 14874 / CCUG 350202 / NBRC 14942 / NCIMB 11054 / UW101) (Cytophaga johnsonae).